The primary structure comprises 276 residues: Undecaprenyl-diphosphatase 1 (276 aa).

6 helical membrane-spanning segments follow: residues Arg43–Phe63, Ala85–Ile105, Leu109–Ala129, Ala184–Gly204, Ala214–Val234, and Ile254–Ala274.

Belongs to the UppP family.

It localises to the cell inner membrane. It carries out the reaction di-trans,octa-cis-undecaprenyl diphosphate + H2O = di-trans,octa-cis-undecaprenyl phosphate + phosphate + H(+). In terms of biological role, catalyzes the dephosphorylation of undecaprenyl diphosphate (UPP). Confers resistance to bacitracin. The polypeptide is Undecaprenyl-diphosphatase 1 (Pseudomonas fluorescens (strain Pf0-1)).